The chain runs to 332 residues: rRNA biogenesis protein rrp-36 (332 aa).

Disordered stretches follow at residues 1 to 91 (MPAV…ASQL), 104 to 196 (GALK…SGKS), 243 to 262 (SMES…ELLS), and 312 to 332 (KKIA…AEDR). Acidic residues-rich tracts occupy residues 27 to 45 (EPDS…EEEG), 53 to 77 (DTEE…DSDA), and 117 to 127 (EDGSDDDEEKE). Composition is skewed to basic and acidic residues over residues 128–142 (EPNW…MKAK) and 165–183 (RRRD…RDPR). The stretch at 212 to 274 (DYQEDEMKQL…KKKEKELIKQ (63 aa)) forms a coiled coil. Over residues 315–332 (AGKEKKALPLARRTAEDR) the composition is skewed to basic and acidic residues.

Belongs to the RRP36 family. Associates with 90S and pre-40S pre-ribosomal particles.

It is found in the nucleus. The protein resides in the nucleolus. Component of the 90S pre-ribosome involved in the maturation of rRNAs. Required for early cleavages of the pre-RNAs in the 40S ribosomal subunit maturation pathway. This chain is rRNA biogenesis protein rrp-36 (rrp-36), found in Neurospora crassa (strain ATCC 24698 / 74-OR23-1A / CBS 708.71 / DSM 1257 / FGSC 987).